A 251-amino-acid chain; its full sequence is uncharacterized protein (251 aa).

The AMMECR1 domain occupies 21 to 246 (KGSSPFAFYA…ITYEEFNKQL (226 aa)).

This is an uncharacterized protein from Saccharomyces cerevisiae (strain ATCC 204508 / S288c) (Baker's yeast).